The chain runs to 412 residues: Alanyl-tRNA editing protein Aarsd1-A (412 aa).

The Zn(2+) site is built by His108, His112, Cys208, and His212.

Belongs to the class-II aminoacyl-tRNA synthetase family. Alax-L subfamily. Zn(2+) is required as a cofactor.

The protein localises to the cytoplasm. Functionally, functions in trans to edit the amino acid moiety from incorrectly charged tRNA(Ala). The protein is Alanyl-tRNA editing protein Aarsd1-A (aarsd1-a) of Xenopus laevis (African clawed frog).